The sequence spans 896 residues: Alanine--tRNA ligase (896 aa).

Residues His-580, His-584, Cys-683, and His-687 each coordinate Zn(2+).

This sequence belongs to the class-II aminoacyl-tRNA synthetase family. Requires Zn(2+) as cofactor.

The protein resides in the cytoplasm. The enzyme catalyses tRNA(Ala) + L-alanine + ATP = L-alanyl-tRNA(Ala) + AMP + diphosphate. Its function is as follows. Catalyzes the attachment of alanine to tRNA(Ala) in a two-step reaction: alanine is first activated by ATP to form Ala-AMP and then transferred to the acceptor end of tRNA(Ala). Also edits incorrectly charged Ser-tRNA(Ala) and Gly-tRNA(Ala) via its editing domain. This chain is Alanine--tRNA ligase, found in Mycolicibacterium smegmatis (strain ATCC 700084 / mc(2)155) (Mycobacterium smegmatis).